A 188-amino-acid polypeptide reads, in one-letter code: Elongation factor P (188 aa).

The protein belongs to the elongation factor P family.

Its subcellular location is the cytoplasm. The protein operates within protein biosynthesis; polypeptide chain elongation. In terms of biological role, involved in peptide bond synthesis. Stimulates efficient translation and peptide-bond synthesis on native or reconstituted 70S ribosomes in vitro. Probably functions indirectly by altering the affinity of the ribosome for aminoacyl-tRNA, thus increasing their reactivity as acceptors for peptidyl transferase. The chain is Elongation factor P from Rickettsia bellii (strain OSU 85-389).